Consider the following 622-residue polypeptide: Dopamine beta-hydroxylase (622 aa).

The Cytoplasmic segment spans residues 1-20; it reads MQAHLSHQPCWSSLPSPSVR. Residues 21 to 41 form a helical; Signal-anchor for type II membrane protein membrane-spanning segment; the sequence is EAASMYGTAVAIFLVILVAAL. Topologically, residues 42 to 621 are intragranular; that stretch reads RGSEPPESPF…TVPITTEADA (580 aa). Positions 61 to 177 constitute a DOMON domain; that stretch reads GILELSWNVS…DTVHLVYGIL (117 aa). N-linked (GlcNAc...) asparagine glycans are attached at residues N68 and N188. Intrachain disulfides connect C158–C600, C236–C287, C273–C299, C394–C507, C398–C569, and C470–C492. Residue Y234 is part of the active site. The Cu(2+) site is built by H266 and H267. H337 is a Cu(2+) binding site. S350 bears the Phosphoserine; by CaMK mark. H416 is an active-site residue. Cu(2+)-binding residues include H416 and H418. N476 carries N-linked (GlcNAc...) asparagine glycosylation. Position 491 (M491) interacts with Cu(2+). The N-linked (GlcNAc...) asparagine glycan is linked to N570. Positions 594 to 622 are disordered; the sequence is EEPTPRCPIRQTQSPANPTVPITTEADAE. The span at 603–615 shows a compositional bias: polar residues; it reads RQTQSPANPTVPI.

The protein belongs to the copper type II ascorbate-dependent monooxygenase family. As to quaternary structure, homotetramer; composed of two disulfide-linked dimers. Cu(2+) is required as a cofactor. Post-translationally, proteolytic cleavage after the membrane-anchor leads to the release of the soluble form. N-glycosylated. In terms of tissue distribution, detected in adrenal gland secretory granules (at protein level). Detected in adrenal gland.

The protein resides in the cytoplasmic vesicle. It localises to the secretory vesicle lumen. The protein localises to the secretory vesicle. It is found in the chromaffin granule lumen. Its subcellular location is the secretory vesicle membrane. The protein resides in the chromaffin granule membrane. The enzyme catalyses dopamine + 2 L-ascorbate + O2 = (R)-noradrenaline + 2 monodehydro-L-ascorbate radical + H2O. Its pathway is catecholamine biosynthesis; (R)-noradrenaline biosynthesis; (R)-noradrenaline from dopamine: step 1/1. Catalyzes the hydroxylation of dopamine to noradrenaline (also known as norepinephrine), and is thus vital for regulation of these neurotransmitters. The polypeptide is Dopamine beta-hydroxylase (Dbh) (Mus musculus (Mouse)).